The sequence spans 281 residues: Phosphonates import ATP-binding protein PhnC 2 (281 aa).

Positions 4-238 (LTVDNVTKTY…LVDDLYGNVE (235 aa)) constitute an ABC transporter domain. An ATP-binding site is contributed by 35–42 (GESGAGKS). Residues 243–281 (ATDNSDNSTVDTSDGTRYDTETGSDGTDEVDVIGRQVES) form a disordered region. A compositionally biased stretch (low complexity) spans 244 to 255 (TDNSDNSTVDTS).

The protein belongs to the ABC transporter superfamily. Phosphonates importer (TC 3.A.1.9.1) family. As to quaternary structure, the complex is composed of two ATP-binding proteins (PhnC), two transmembrane proteins (PhnE) and a solute-binding protein (PhnD).

The protein resides in the cell membrane. The catalysed reaction is phosphonate(out) + ATP + H2O = phosphonate(in) + ADP + phosphate + H(+). In terms of biological role, part of the ABC transporter complex PhnCDE involved in phosphonates import. Responsible for energy coupling to the transport system. This is Phosphonates import ATP-binding protein PhnC 2 from Haloquadratum walsbyi (strain DSM 16790 / HBSQ001).